The following is a 332-amino-acid chain: Junctional sarcoplasmic reticulum protein 1 (332 aa).

Residues 1–80 (MTTRGLEDLD…EKELAGKEST (80 aa)) are mediates interaction with CACNA1S. Disordered regions lie at residues 1–125 (MTTR…PWGD) and 159–332 (APHP…KGRD). Thr51 is modified (phosphothreonine). A compositionally biased stretch (basic and acidic residues) spans 66–76 (GLKKMEKELAG). 2 stretches are compositionally biased toward pro residues: residues 98-116 (QAPP…PPRT) and 177-197 (APKP…PGPP). Residues 221–232 (GGSISEASGEES) are compositionally biased toward low complexity. Phosphoserine is present on residues Ser223 and Ser228. Basic and acidic residues-rich tracts occupy residues 239-256 (GSQE…EKLK) and 283-307 (RRWE…EHGK).

As to quaternary structure, interacts with CACNA1S, CACNB1 and calsequestrin. As to expression, specifically expressed in skeletal muscle. Detected in skeletal muscle and tongue (at protein level).

The protein localises to the sarcoplasmic reticulum membrane. It localises to the endoplasmic reticulum membrane. Involved in skeletal muscle excitation/contraction coupling (EC), probably acting as a regulator of the voltage-sensitive calcium channel CACNA1S. EC is a physiological process whereby an electrical signal (depolarization of the plasma membrane) is converted into a chemical signal, a calcium gradient, by the opening of ryanodine receptor calcium release channels. May regulate CACNA1S membrane targeting and activity. In Mus musculus (Mouse), this protein is Junctional sarcoplasmic reticulum protein 1 (Jsrp1).